Consider the following 72-residue polypeptide: Protein LITTLE ZIPPER 4 (72 aa).

Residues 14–44 (YIIKENERLRKKAQILNQENQQLLFELKQKL) adopt a coiled-coil conformation. The segment at 42 to 72 (QKLSKTKNSSGSNQGNNNNNNNLSSSSSASG) is disordered. A compositionally biased stretch (low complexity) spans 49–72 (NSSGSNQGNNNNNNNLSSSSSASG).

As to quaternary structure, interacts with REV.

Its function is as follows. Competitive inhibitor of the HD-ZIPIII transcription factors in shoot apical meristem (SAM) development. Acts by forming non-functional heterodimers. Part of a negative feedback loop. Essential for proper functioning of stem cells in the SAM. In Arabidopsis thaliana (Mouse-ear cress), this protein is Protein LITTLE ZIPPER 4.